The chain runs to 388 residues: GTPase Obg (388 aa).

Residues 1-159 enclose the Obg domain; it reads MKFIDEASIR…RSLRLELLLL (159 aa). An OBG-type G domain is found at 160–333; that stretch reads ADVGLLGMPN…LSLKLLDYIA (174 aa). GTP-binding positions include 166–173, 191–195, 213–216, 283–286, and 314–316; these read GMPNAGKS, FTTLV, DIPG, NKTD, and SAF. Residues Ser173 and Thr193 each contribute to the Mg(2+) site.

The protein belongs to the TRAFAC class OBG-HflX-like GTPase superfamily. OBG GTPase family. In terms of assembly, monomer. Requires Mg(2+) as cofactor.

It localises to the cytoplasm. An essential GTPase which binds GTP, GDP and possibly (p)ppGpp with moderate affinity, with high nucleotide exchange rates and a fairly low GTP hydrolysis rate. Plays a role in control of the cell cycle, stress response, ribosome biogenesis and in those bacteria that undergo differentiation, in morphogenesis control. The sequence is that of GTPase Obg from Shewanella denitrificans (strain OS217 / ATCC BAA-1090 / DSM 15013).